An 89-amino-acid chain; its full sequence is MLTDLECAINSLIDVYHKYSLKKGNYHAVYRDDLKQLLETECPKFMKKKDADTWFKELDINQDGGINFEEFLVLVIKVGLEAHEEIHKE.

2 consecutive EF-hand domains span residues 12-47 (LIDV…KFMK) and 46-81 (MKKK…VGLE). Zn(2+) is bound by residues H17 and H27. D33 provides a ligand contact to Ca(2+). An S-nitrosocysteine modification is found at C42. Ca(2+)-binding residues include D59, N61, D63, and E70. H83 provides a ligand contact to Zn(2+).

The protein belongs to the S-100 family. As to quaternary structure, homodimer. Preferentially exists as a heterodimer or heterotetramer with S100A9 known as calprotectin (S100A8/A9). S100A8 interacts with AGER, ATP2A2 and with the heterodimeric complex formed by TLR4 and LY96. Calprotectin (S100A8/9) interacts with CEACAM3 and tubulin filaments in a calcium-dependent manner. Heterotetrameric calprotectin (S100A8/A9) interacts with ANXA6 and associates with tubulin filaments in activated monocytes. S100A8 and calprotectin (S100A8/9) interact with NCF2/P67PHOX, RAC1 and RAC2. Calprotectin (S100A8/9) interacts with CYBA and CYBB. Calprotectin (S100A8/9) interacts with NOS2 to form the iNOS-S100A8/A9 transnitrosylase complex. Calprotectin (S100A8/9) interacts with CD69. Found essentially in phagocytic cells.

It is found in the secreted. Its subcellular location is the cytoplasm. It localises to the cytoskeleton. The protein resides in the cell membrane. In terms of biological role, S100A8 is a calcium- and zinc-binding protein which plays a prominent role in the regulation of inflammatory processes and immune response. It can induce neutrophil chemotaxis and adhesion. Predominantly found as calprotectin (S100A8/A9) which has a wide plethora of intra- and extracellular functions. The intracellular functions include: facilitating leukocyte arachidonic acid trafficking and metabolism, modulation of the tubulin-dependent cytoskeleton during migration of phagocytes and activation of the neutrophilic NADPH-oxidase. Also participates in regulatory T-cell differentiation together with CD69. Activates NADPH-oxidase by facilitating the enzyme complex assembly at the cell membrane, transferring arachidonic acid, an essential cofactor, to the enzyme complex and S100A8 contributes to the enzyme assembly by directly binding to NCF2/P67PHOX. The extracellular functions involve pro-inflammatory, antimicrobial, oxidant-scavenging and apoptosis-inducing activities. Its pro-inflammatory activity includes recruitment of leukocytes, promotion of cytokine and chemokine production, and regulation of leukocyte adhesion and migration. Acts as an alarmin or a danger associated molecular pattern (DAMP) molecule and stimulates innate immune cells via binding to pattern recognition receptors such as Toll-like receptor 4 (TLR4) and receptor for advanced glycation endproducts (AGER). Binding to TLR4 and AGER activates the MAP-kinase and NF-kappa-B signaling pathways resulting in the amplification of the pro-inflammatory cascade. Has antimicrobial activity towards bacteria and fungi and exerts its antimicrobial activity probably via chelation of Zn(2+) which is essential for microbial growth. Can induce cell death via autophagy and apoptosis and this occurs through the cross-talk of mitochondria and lysosomes via reactive oxygen species (ROS) and the process involves BNIP3. Can regulate neutrophil number and apoptosis by an anti-apoptotic effect; regulates cell survival via ITGAM/ITGB and TLR4 and a signaling mechanism involving MEK-ERK. Its role as an oxidant scavenger has a protective role in preventing exaggerated tissue damage by scavenging oxidants. The iNOS-S100A8/A9 transnitrosylase complex is proposed to direct selective inflammatory stimulus-dependent S-nitrosylation of multiple targets such as GAPDH, ANXA5, EZR, MSN and VIM by recognizing a [IL]-x-C-x-x-[DE] motif; S100A8 seems to contribute to S-nitrosylation site selectivity. The polypeptide is Protein S100-A8 (S100A8) (Bos taurus (Bovine)).